The sequence spans 384 residues: Deoxyguanosinetriphosphate triphosphohydrolase-like protein (384 aa).

The segment at L13–D42 is disordered. Basic and acidic residues predominate over residues H28–D42. In terms of domain architecture, HD spans R73–N208.

The protein belongs to the dGTPase family. Type 2 subfamily.

The chain is Deoxyguanosinetriphosphate triphosphohydrolase-like protein from Bordetella bronchiseptica (strain ATCC BAA-588 / NCTC 13252 / RB50) (Alcaligenes bronchisepticus).